The following is an 892-amino-acid chain: Alanine--tRNA ligase (892 aa).

4 residues coordinate Zn(2+): His565, His569, Cys678, and His682. The interval 857-876 (GGKGGGGRPDMAQAGGPDGA) is disordered.

The protein belongs to the class-II aminoacyl-tRNA synthetase family. Requires Zn(2+) as cofactor.

The protein localises to the cytoplasm. The enzyme catalyses tRNA(Ala) + L-alanine + ATP = L-alanyl-tRNA(Ala) + AMP + diphosphate. Its function is as follows. Catalyzes the attachment of alanine to tRNA(Ala) in a two-step reaction: alanine is first activated by ATP to form Ala-AMP and then transferred to the acceptor end of tRNA(Ala). Also edits incorrectly charged Ser-tRNA(Ala) and Gly-tRNA(Ala) via its editing domain. The chain is Alanine--tRNA ligase from Bradyrhizobium diazoefficiens (strain JCM 10833 / BCRC 13528 / IAM 13628 / NBRC 14792 / USDA 110).